A 213-amino-acid polypeptide reads, in one-letter code: Validoxylamine A 7'-phosphate phosphatase (213 aa).

The active-site Nucleophile is the aspartate 8. A divalent metal cation-binding residues include aspartate 8 and aspartate 10. Residues 8–10 (DLD), 107–108 (TS), and lysine 140 each bind substrate. Aspartate 10 functions as the Proton donor in the catalytic mechanism. Aspartate 165 is an a divalent metal cation binding site.

Belongs to the HAD-like hydrolase superfamily. CbbY/CbbZ/Gph/YieH family. Mg(2+) serves as cofactor. Requires Mn(2+) as cofactor. The cofactor is Co(2+).

It catalyses the reaction validoxylamine A 7'-phosphate + H2O = validoxylamine A + phosphate. Its function is as follows. Involved in the biosynthesis of the antifungal agent validamycin A. Catalyzes the dephosphorylation of validoxylamine A 7'-phosphate to yield validoxylamine A. VldH is also able to convert trehalose 6-phosphate to trehalose. The polypeptide is Validoxylamine A 7'-phosphate phosphatase (Streptomyces hygroscopicus subsp. limoneus).